The primary structure comprises 1333 residues: DNA-directed RNA polymerase subunit beta' (1333 aa).

Positions 60, 62, 75, and 78 each coordinate Zn(2+). Residues Asp-535, Asp-537, and Asp-539 each contribute to the Mg(2+) site. Cys-901, Cys-983, Cys-990, and Cys-993 together coordinate Zn(2+).

The protein belongs to the RNA polymerase beta' chain family. In terms of assembly, the RNAP catalytic core consists of 2 alpha, 1 beta, 1 beta' and 1 omega subunit. When a sigma factor is associated with the core the holoenzyme is formed, which can initiate transcription. Requires Mg(2+) as cofactor. Zn(2+) is required as a cofactor.

It catalyses the reaction RNA(n) + a ribonucleoside 5'-triphosphate = RNA(n+1) + diphosphate. Its function is as follows. DNA-dependent RNA polymerase catalyzes the transcription of DNA into RNA using the four ribonucleoside triphosphates as substrates. This Corynebacterium glutamicum (strain R) protein is DNA-directed RNA polymerase subunit beta'.